The chain runs to 143 residues: UPF0292 protein Mbar_A0484 (143 aa).

The 82-residue stretch at 28–109 (GAIIIVEGKR…KPELEIRNKL (82 aa)) folds into the Toprim domain. 3 residues coordinate Mg(2+): Glu-34, Asp-78, and Asp-80.

Belongs to the UPF0292 family. Requires Mg(2+) as cofactor.

This Methanosarcina barkeri (strain Fusaro / DSM 804) protein is UPF0292 protein Mbar_A0484.